The sequence spans 1088 residues: Platelet-derived growth factor receptor alpha (1088 aa).

The N-terminal stretch at 1–23 is a signal peptide; it reads MGTSQAFLVLSCLLTGPSLIVCQ. 5 consecutive Ig-like C2-type domains span residues 24-112, 116-200, 201-305, 318-409, and 413-516; these read LLLP…SEIE, IYIY…FKTS, EFNV…KTVT, PTFG…FELS, and PASI…LKLV. At 24 to 527 the chain is on the extracellular side; that stretch reads LLLPSILPNE…PSLRSELTVA (504 aa). The cysteines at positions 48 and 99 are disulfide-linked. Asn75, Asn102, and Asn178 each carry an N-linked (GlcNAc...) asparagine glycan. Cystine bridges form between Cys149/Cys188 and Cys234/Cys289. Residues Asn352, Asn358, Asn457, and Asn467 are each glycosylated (N-linked (GlcNAc...) asparagine). A disulfide bridge links Cys434 with Cys500. The helical transmembrane segment at 528–548 threads the bilayer; the sequence is AAVLVLLVIVIVSLIVLVVIW. At 549-1088 the chain is on the cytoplasmic side; sequence KQKPRYEIRW…SSDLVEDSFL (540 aa). Phosphotyrosine; by autocatalysis is present on residues Tyr571 and Tyr573. The region spanning 592–953 is the Protein kinase domain; the sequence is LVLGRILGSG…HLSEIVENLL (362 aa). ATP is bound by residues 598–606 and Lys626; that span reads LGSGAFGKV. Tyr719, Tyr730, Tyr741, Tyr753, Tyr761, and Tyr767 each carry phosphotyrosine; by autocatalysis. Asp817 acts as the Proton acceptor in catalysis. Phosphotyrosine; by autocatalysis is present on residues Tyr848, Tyr987, and Tyr1017. Residues 1017 to 1088 are disordered; sequence YIIPLPDIDP…SSDLVEDSFL (72 aa). The segment covering 1040 to 1058 has biased composition (polar residues); that stretch reads SSQTSEESAIETGSSSSTF. A compositionally biased stretch (acidic residues) spans 1064-1088; sequence ETIEDIDMMDDIGIDSSDLVEDSFL.

This sequence belongs to the protein kinase superfamily. Tyr protein kinase family. CSF-1/PDGF receptor subfamily. In terms of assembly, interacts with homodimeric PDGFA, PDGFB and PDGFC, and with heterodimers formed by PDGFA and PDGFB. Monomer in the absence of bound ligand. Interaction with dimeric PDGFA, PDGFB and/or PDGFC leads to receptor dimerization, where both PDGFRA homodimers and heterodimers with PDGFRB are observed. Interacts (tyrosine phosphorylated) with SHB (via SH2 domain). Interacts (tyrosine phosphorylated) with SHF (via SH2 domain). Interacts (tyrosine phosphorylated) with SRC (via SH2 domain). Interacts (tyrosine phosphorylated) with PIK3R1. Interacts (tyrosine phosphorylated) with PLCG1 (via SH2 domain). Interacts (tyrosine phosphorylated) with CRK, GRB2 and GRB7. Interacts with CD248; this interaction promotes PDGF receptor signaling pathway. In terms of processing, ubiquitinated, leading to its internalization and degradation. Autophosphorylated on tyrosine residues upon ligand binding. Autophosphorylation occurs in trans, i.e. one subunit of the dimeric receptor phosphorylates tyrosine residues on the other subunit. Phosphorylation at Tyr-730 and Tyr-741 is important for interaction with PIK3R1. Phosphorylation at Tyr-719 and Tyr-753 is important for interaction with PTPN11. Phosphorylation at Tyr-761 is important for interaction with CRK. Phosphorylation at Tyr-571 and Tyr-573 is important for interaction with SRC and SRC family members. Phosphorylation at Tyr-987 and Tyr-1017 is important for interaction with PLCG1.

The protein localises to the cell membrane. Its subcellular location is the cell projection. It is found in the cilium. The protein resides in the golgi apparatus. It carries out the reaction L-tyrosyl-[protein] + ATP = O-phospho-L-tyrosyl-[protein] + ADP + H(+). Its activity is regulated as follows. Present in an inactive conformation in the absence of bound ligand. Binding of PDGFA and/or PDGFB leads to dimerization and activation by autophosphorylation on tyrosine residues. Inhibited by imatinib, nilotinib and sorafenib. Tyrosine-protein kinase that acts as a cell-surface receptor for PDGFA, PDGFB and PDGFC and plays an essential role in the regulation of embryonic development, cell proliferation, survival and chemotaxis. Depending on the context, promotes or inhibits cell proliferation and cell migration. Plays an important role in the differentiation of bone marrow-derived mesenchymal stem cells. Required for normal skeleton development and cephalic closure during embryonic development. Required for normal development of the mucosa lining the gastrointestinal tract, and for recruitment of mesenchymal cells and normal development of intestinal villi. Plays a role in cell migration and chemotaxis in wound healing. Plays a role in platelet activation, secretion of agonists from platelet granules, and in thrombin-induced platelet aggregation. Binding of its cognate ligands - homodimeric PDGFA, homodimeric PDGFB, heterodimers formed by PDGFA and PDGFB or homodimeric PDGFC -leads to the activation of several signaling cascades; the response depends on the nature of the bound ligand and is modulated by the formation of heterodimers between PDGFRA and PDGFRB. Phosphorylates PIK3R1, PLCG1, and PTPN11. Activation of PLCG1 leads to the production of the cellular signaling molecules diacylglycerol and inositol 1,4,5-trisphosphate, mobilization of cytosolic Ca(2+) and the activation of protein kinase C. Phosphorylates PIK3R1, the regulatory subunit of phosphatidylinositol 3-kinase, and thereby mediates activation of the AKT1 signaling pathway. Mediates activation of HRAS and of the MAP kinases MAPK1/ERK2 and/or MAPK3/ERK1. Promotes activation of STAT family members STAT1, STAT3 and STAT5A and/or STAT5B. Receptor signaling is down-regulated by protein phosphatases that dephosphorylate the receptor and its down-stream effectors, and by rapid internalization of the activated receptor. In Rattus norvegicus (Rat), this protein is Platelet-derived growth factor receptor alpha (Pdgfra).